Reading from the N-terminus, the 1012-residue chain is RAS protein activator like-3 (1012 aa).

Disordered stretches follow at residues 1–128 (MDPP…TPDV), 147–196 (GNED…QIHN), and 208–229 (KKAK…ALGS). A compositionally biased stretch (polar residues) spans 7-21 (SRASQTQPVAPSPLT). S18 carries the post-translational modification Phosphoserine. A compositionally biased stretch (gly residues) spans 27-39 (SGGGAEKGAGGFR). The segment covering 50–62 (QSHQETTASSQPA) has biased composition (polar residues). A Phosphoserine modification is found at S51. Residues 100–113 (SEPEPENPEPEPEL) show a composition bias toward acidic residues. Phosphoserine occurs at positions 160, 162, 163, and 166. Low complexity predominate over residues 160-171 (SASSESSIHVAS). Residues 175-186 (KDPDRTPGKTDP) are compositionally biased toward basic and acidic residues. The 102-residue stretch at 193-294 (QIHNVRGLLK…WIEDLRRHFQ (102 aa)) folds into the PH domain. Phosphoserine is present on residues S212, S225, S229, and S232. T235 is modified (phosphothreonine). In terms of domain architecture, C2 spans 285–405 (WIEDLRRHFQ…APAAGLERWF (121 aa)). The Ras-GAP domain occupies 475 to 683 (GRAQALVTDL…PAMQHFLDQV (209 aa)). The segment at 752–887 (PAPRTQGHSS…DKDQALGTHR (136 aa)) is disordered. S788 and S791 each carry phosphoserine. A compositionally biased stretch (basic residues) spans 826-841 (PARRRPSAGPRPRPKG). The stretch at 889-989 (VGKLAELQCE…KDTIQNLQLL (101 aa)) forms a coiled coil. Positions 990–999 (PRTSESQSQP) are enriched in polar residues. The tract at residues 990-1012 (PRTSESQSQPVPLKAPCINGDTT) is disordered.

The protein resides in the cytoplasm. Its subcellular location is the cell cortex. Functionally, functions as a Ras GTPase-activating protein. Plays an important role in the expansion and functions of natural killer T (NKT) cells in the liver by negatively regulating RAS activity and the down-stream ERK signaling pathway. This chain is RAS protein activator like-3 (RASAL3), found in Bos taurus (Bovine).